The chain runs to 387 residues: Putative glutamate--cysteine ligase 2 (387 aa).

The protein belongs to the glutamate--cysteine ligase type 2 family. YbdK subfamily.

The enzyme catalyses L-cysteine + L-glutamate + ATP = gamma-L-glutamyl-L-cysteine + ADP + phosphate + H(+). Functionally, ATP-dependent carboxylate-amine ligase which exhibits weak glutamate--cysteine ligase activity. This chain is Putative glutamate--cysteine ligase 2, found in Pseudomonas fluorescens (strain ATCC BAA-477 / NRRL B-23932 / Pf-5).